Consider the following 515-residue polypeptide: Penton protein (515 aa).

The segment at 1–25 (MYRSLRPPTSIPPPPPSGPSPYPAM) is disordered. The span at 9-22 (TSIPPPPPSGPSPY) shows a compositional bias: pro residues.

The protein belongs to the adenoviridae penton family. In terms of assembly, interacts with the fiber protein (via N-terminal tail region). Interacts with the capsid vertex protein; this interaction binds the penton base to neighboring peripentonal hexons.

Its subcellular location is the virion. The protein localises to the host nucleus. Functionally, major capsid protein that self-associates to form penton base pentamers, each in the shape of a pentagon, situated at the 12 vertices of the pseudo T=25 capsid. Involved in virus secondary attachment to host cell after initial attachment by the fiber protein, and in endocytosis of virions. As the virus enters the host cell, penton proteins are shed concomitant with virion acidification in the endosome. The polypeptide is Penton protein (Galliformes (FAdV-1)).